The following is a 501-amino-acid chain: MSEHQYILALDQGTTSSRAIVFDHQGNMKGVGQQEFRQHFPKPGWVEHDANEIWSTQIGVAQQALSNAGIRASDLAAIGITNQRETTLIWDRATGKPIHHAIVWQDRRTAPYCDSIRAQHEKTLQDKTGLVLDAYFSGTKVKWLLDNVPGARERAEKGELAFGTIDSWLVYNLTGGELHITDATNASRTLLYNIHTGEWDDELLRILDVPRSVLPEVRNSSEVYGKTAAGLLGAQVPIAGIGGDQQAATFGQACLERGMAKNTYGTGCFMLMNTEGEAVPSQNKLLTTVAWQLDGERTYALEGSVFIGGAVVQWLRDGLNIIRSSTEIEALARTVDSSEGVMLVPAFVGLGAPYWDAYARGTMVGITRGTTKAHIARAALEAVAYQSAELLEAMQKDSGVELKELRVDGGASTNDLMMQFQADILGVPVIRPKVTETTALGAAYLAGLAVGYWKSTDDIAHQWQEDKRFEPQMSEEERSKLMRRWKKAVARARDWEDDSEA.

Threonine 14 provides a ligand contact to ADP. The ATP site is built by threonine 14, threonine 15, and serine 16. Threonine 14 is a sn-glycerol 3-phosphate binding site. Arginine 18 lines the ADP pocket. Arginine 84, glutamate 85, tyrosine 135, and aspartate 244 together coordinate sn-glycerol 3-phosphate. Residues arginine 84, glutamate 85, tyrosine 135, aspartate 244, and glutamine 245 each coordinate glycerol. The ADP site is built by threonine 266 and glycine 309. Residues threonine 266, glycine 309, glutamine 313, and glycine 410 each coordinate ATP. ADP-binding residues include glycine 410 and asparagine 414.

The protein belongs to the FGGY kinase family.

It carries out the reaction glycerol + ATP = sn-glycerol 3-phosphate + ADP + H(+). The protein operates within polyol metabolism; glycerol degradation via glycerol kinase pathway; sn-glycerol 3-phosphate from glycerol: step 1/1. With respect to regulation, inhibited by fructose 1,6-bisphosphate (FBP). In terms of biological role, key enzyme in the regulation of glycerol uptake and metabolism. Catalyzes the phosphorylation of glycerol to yield sn-glycerol 3-phosphate. The protein is Glycerol kinase of Deinococcus radiodurans (strain ATCC 13939 / DSM 20539 / JCM 16871 / CCUG 27074 / LMG 4051 / NBRC 15346 / NCIMB 9279 / VKM B-1422 / R1).